Consider the following 95-residue polypeptide: Aspartyl/glutamyl-tRNA(Asn/Gln) amidotransferase subunit C (95 aa).

It belongs to the GatC family. Heterotrimer of A, B and C subunits.

The enzyme catalyses L-glutamyl-tRNA(Gln) + L-glutamine + ATP + H2O = L-glutaminyl-tRNA(Gln) + L-glutamate + ADP + phosphate + H(+). The catalysed reaction is L-aspartyl-tRNA(Asn) + L-glutamine + ATP + H2O = L-asparaginyl-tRNA(Asn) + L-glutamate + ADP + phosphate + 2 H(+). Functionally, allows the formation of correctly charged Asn-tRNA(Asn) or Gln-tRNA(Gln) through the transamidation of misacylated Asp-tRNA(Asn) or Glu-tRNA(Gln) in organisms which lack either or both of asparaginyl-tRNA or glutaminyl-tRNA synthetases. The reaction takes place in the presence of glutamine and ATP through an activated phospho-Asp-tRNA(Asn) or phospho-Glu-tRNA(Gln). The sequence is that of Aspartyl/glutamyl-tRNA(Asn/Gln) amidotransferase subunit C from Methylococcus capsulatus (strain ATCC 33009 / NCIMB 11132 / Bath).